The sequence spans 362 residues: PDZ and LIM domain protein 3 (362 aa).

A PDZ domain is found at 1-84 (MPQNVVLPGP…QLCLKIDRAE (84 aa)). A phosphoserine mark is found at S18, S92, and S263. The disordered stretch occupies residues 261–282 (DGSDDRPAGTRSVRPVTKVHGG). One can recognise an LIM zinc-binding domain in the interval 290 to 349 (PLCDKCGSGIVGAVVKARDKYRHPECFVCADCNLNLKQKGYFFVEGELYCEMHARARTRP).

As to quaternary structure, interacts with ACTN2. Forms a heterodimer with PDLIM4 (via LIM domain). In terms of tissue distribution, highly expressed in skeletal muscle and at low levels in the heart.

The protein resides in the cytoplasm. It is found in the myofibril. The protein localises to the sarcomere. It localises to the z line. In terms of biological role, may play a role in the organization of actin filament arrays within muscle cells. This is PDZ and LIM domain protein 3 (Pdlim3) from Rattus norvegicus (Rat).